We begin with the raw amino-acid sequence, 181 residues long: Crossover junction endodeoxyribonuclease RuvC (181 aa).

Active-site residues include D7, E67, and D139. Residues D7, E67, and D139 each coordinate Mg(2+).

The protein belongs to the RuvC family. Homodimer which binds Holliday junction (HJ) DNA. The HJ becomes 2-fold symmetrical on binding to RuvC with unstacked arms; it has a different conformation from HJ DNA in complex with RuvA. In the full resolvosome a probable DNA-RuvA(4)-RuvB(12)-RuvC(2) complex forms which resolves the HJ. Requires Mg(2+) as cofactor.

It localises to the cytoplasm. It catalyses the reaction Endonucleolytic cleavage at a junction such as a reciprocal single-stranded crossover between two homologous DNA duplexes (Holliday junction).. Functionally, the RuvA-RuvB-RuvC complex processes Holliday junction (HJ) DNA during genetic recombination and DNA repair. Endonuclease that resolves HJ intermediates. Cleaves cruciform DNA by making single-stranded nicks across the HJ at symmetrical positions within the homologous arms, yielding a 5'-phosphate and a 3'-hydroxyl group; requires a central core of homology in the junction. The consensus cleavage sequence is 5'-(A/T)TT(C/G)-3'. Cleavage occurs on the 3'-side of the TT dinucleotide at the point of strand exchange. HJ branch migration catalyzed by RuvA-RuvB allows RuvC to scan DNA until it finds its consensus sequence, where it cleaves and resolves the cruciform DNA. In Bordetella avium (strain 197N), this protein is Crossover junction endodeoxyribonuclease RuvC.